The chain runs to 167 residues: tRNA-specific adenosine deaminase (167 aa).

Positions 6–117 constitute a CMP/dCMP-type deaminase domain; sequence FSHEYWMRHA…DAKTGAAGSL (112 aa). Position 57 (His-57) interacts with Zn(2+). The active-site Proton donor is the Glu-59. Residues Cys-87 and Cys-90 each contribute to the Zn(2+) site.

It belongs to the cytidine and deoxycytidylate deaminase family. In terms of assembly, homodimer. Zn(2+) serves as cofactor.

The catalysed reaction is adenosine(34) in tRNA + H2O + H(+) = inosine(34) in tRNA + NH4(+). Functionally, catalyzes the deamination of adenosine to inosine at the wobble position 34 of tRNA(Arg2). This is tRNA-specific adenosine deaminase from Escherichia coli O157:H7.